The primary structure comprises 187 residues: Elongation factor P (187 aa).

The protein belongs to the elongation factor P family.

It is found in the cytoplasm. It participates in protein biosynthesis; polypeptide chain elongation. Functionally, involved in peptide bond synthesis. Stimulates efficient translation and peptide-bond synthesis on native or reconstituted 70S ribosomes in vitro. Probably functions indirectly by altering the affinity of the ribosome for aminoacyl-tRNA, thus increasing their reactivity as acceptors for peptidyl transferase. The protein is Elongation factor P of Granulibacter bethesdensis (strain ATCC BAA-1260 / CGDNIH1).